We begin with the raw amino-acid sequence, 895 residues long: Androgen receptor (895 aa).

A modulating region spans residues 1–533 (MEVQLGLGRV…PIDYYFPPQK (533 aa)). Residues 1 to 562 (MEVQLGLGRV…GSCKVFFKRA (562 aa)) are interaction with ZNF318. Disordered regions lie at residues 33 to 150 (VIQN…LSLL) and 178 to 211 (QQQQ…YLEG). 2 stretches are compositionally biased toward low complexity: residues 44-81 (AASA…GSPQ) and 178-200 (QQQQ…ASGA). Ser-65 is subject to Phosphoserine; by CDK9. A Phosphoserine modification is found at Ser-79. Residues 201-211 (PTSSKDNYLEG) are compositionally biased toward polar residues. Tyr-208 is subject to Phosphotyrosine; by CSK. A Phosphoserine modification is found at Ser-241. Residue Tyr-252 is modified to Phosphotyrosine; by CSK and TNK2. A phosphotyrosine; by CSK mark is found at Tyr-292, Tyr-331, Tyr-342, and Tyr-347. Tyr-348 bears the Phosphotyrosine; by CSK and TNK2 mark. Lys-371 is covalently cross-linked (Glycyl lysine isopeptide (Lys-Gly) (interchain with G-Cter in SUMO)). Tyr-378 is subject to Phosphotyrosine; by CSK. Lys-496 participates in a covalent cross-link: Glycyl lysine isopeptide (Lys-Gly) (interchain with G-Cter in SUMO). A phosphotyrosine; by CSK mark is found at Tyr-510 and Tyr-527. The tract at residues 527–894 (YYFPPQKTCL…GKVKPIYFHT (368 aa)) is interaction with LPXN. The nuclear receptor DNA-binding region spans 534–607 (TCLICGDEAS…AGMTLGARKL (74 aa)). 2 NR C4-type zinc fingers span residues 535–555 (CLIC…CGSC) and 571–595 (CASR…LRKC). The tract at residues 547–637 (YGALTCGSCK…TEETAQKLTV (91 aa)) is interaction with HIPK3. Residues 567–894 (QKYLCASRND…GKVKPIYFHT (328 aa)) are interaction with CCAR1. Residues 600–894 (MTLGARKLKK…GKVKPIYFHT (295 aa)) are interaction with KAT7. Ser-626 bears the Phosphoserine; by STK4/MST1 mark. The 232-residue stretch at 644–875 (ECQPIFLNVL…DFPEMMAEII (232 aa)) folds into the NR LBD domain. 2 residues coordinate 17beta-hydroxy-5alpha-androstan-3-one: Asn-681 and Arg-728. Residues Lys-821 and Lys-823 each participate in a glycyl lysine isopeptide (Lys-Gly) (interchain with G-Cter in ubiquitin) cross-link. Thr-853 contacts 17beta-hydroxy-5alpha-androstan-3-one. Phosphotyrosine; by CSK is present on Tyr-891.

It belongs to the nuclear hormone receptor family. NR3 subfamily. In terms of assembly, binds DNA as a homodimer. Part of a ternary complex containing AR, EFCAB6/DJBP and PARK7. Interacts with HIPK3 and NR0B2 in the presence of androgen. The ligand binding domain interacts with KAT7/HBO1 in the presence of dihydrotestosterone. Interacts with EFCAB6/DJBP, PQBP1, RANBP9, RBAK, SPDEF, SRA1, TGFB1I1 and RREB1. Interacts with ZMIZ1/ZIMP10 and ZMIZ2/ZMIP7 which both enhance its transactivation activity. Interacts with SLC30A9 and RAD54L2/ARIP4. Interacts with MACROD1 (via macro domain). Interacts via the ligand-binding domain with LXXLL and FXXLF motifs from NCOA1, NCOA2, NCOA3 and MAGEA11. Interacts (via nuclear receptor DNA binding domain and nuclear receptor ligand binding domain) with NCOA4. The AR N-terminal poly-Gln region binds Ran resulting in enhancement of AR-mediated transactivation. Ran-binding decreases as the poly-Gln length increases. Interacts with HIP1 (via coiled coil domain). Interacts (via ligand-binding domain) with TRIM68. Interacts with TNK2. Interacts with USP26. Interacts with RNF6. Interacts (regulated by RNF6 probably through polyubiquitination) with RNF14; regulates AR transcriptional activity. Interacts with PRMT2 and TRIM24. Interacts with RACK1. Interacts with RANBP10; this interaction enhances dihydrotestosterone-induced AR transcriptional activity. Interacts with PRPF6 in a hormone-independent way; this interaction enhances dihydrotestosterone-induced AR transcriptional activity. Interacts with STK4/MST1. Interacts with ZIPK/DAPK3. Interacts with LPXN. Interacts with MAK. Part of a complex containing AR, MAK and NCOA3. Interacts with CRY1. Interacts with CCAR1 and GATA2. Interacts with ZNF318. Interacts with BUD31. Interacts with ARID4A. Interacts with ARID4B. Interacts (via NR LBD domain) with ZBTB7A; the interaction is direct and androgen-dependent. Interacts with NCOR1. Interacts with NCOR2. Interacts with CRY2 in a ligand-dependent manner. In terms of processing, phosphorylated in prostate cancer cells in response to several growth factors including EGF. Phosphorylation is induced by c-Src kinase (CSK). Tyr-510 is one of the major phosphorylation sites and an increase in phosphorylation and Src kinase activity is associated with prostate cancer progression. Phosphorylation by TNK2 enhances the DNA-binding and transcriptional activity. Phosphorylation at Ser-65 by CDK9 regulates AR promoter selectivity and cell growth. Post-translationally, sumoylated on Lys-371 (major) and Lys-496. Ubiquitinated. Deubiquitinated by USP26. 'Lys-6' and 'Lys-27'-linked polyubiquitination by RNF6 modulates AR transcriptional activity and specificity. Palmitoylated by ZDHHC7 and ZDHHC21. Palmitoylation is required for plasma membrane targeting and for rapid intracellular signaling via ERK and AKT kinases and cAMP generation.

It localises to the nucleus. Its subcellular location is the cytoplasm. Functionally, steroid hormone receptors are ligand-activated transcription factors that regulate eukaryotic gene expression and affect cellular proliferation and differentiation in target tissues. Transcription factor activity is modulated by bound coactivator and corepressor proteins like ZBTB7A that recruits NCOR1 and NCOR2 to the androgen response elements/ARE on target genes, negatively regulating androgen receptor signaling and androgen-induced cell proliferation. Transcription activation is also down-regulated by NR0B2. Activated, but not phosphorylated, by HIPK3 and ZIPK/DAPK3. The sequence is that of Androgen receptor (AR) from Macaca mulatta (Rhesus macaque).